Here is a 309-residue protein sequence, read N- to C-terminus: Homoserine O-succinyltransferase (309 aa).

Cysteine 142 acts as the Acyl-thioester intermediate in catalysis. Positions 163 and 192 each coordinate substrate. The Proton acceptor role is filled by histidine 235. The active site involves glutamate 237. Arginine 249 provides a ligand contact to substrate.

This sequence belongs to the MetA family. In terms of assembly, homodimer.

It localises to the cytoplasm. It carries out the reaction L-homoserine + succinyl-CoA = O-succinyl-L-homoserine + CoA. The protein operates within amino-acid biosynthesis; L-methionine biosynthesis via de novo pathway; O-succinyl-L-homoserine from L-homoserine: step 1/1. In terms of biological role, transfers a succinyl group from succinyl-CoA to L-homoserine, forming succinyl-L-homoserine. The chain is Homoserine O-succinyltransferase from Escherichia coli O127:H6 (strain E2348/69 / EPEC).